Here is a 172-residue protein sequence, read N- to C-terminus: Small ribosomal subunit protein uS5 (172 aa).

The region spanning 17 to 80 is the S5 DRBM domain; sequence LREKMISVNR…EQARRNMFKV (64 aa).

This sequence belongs to the universal ribosomal protein uS5 family. Part of the 30S ribosomal subunit. Contacts proteins S4 and S8.

In terms of biological role, with S4 and S12 plays an important role in translational accuracy. Functionally, located at the back of the 30S subunit body where it stabilizes the conformation of the head with respect to the body. The chain is Small ribosomal subunit protein uS5 from Paraburkholderia xenovorans (strain LB400).